The sequence spans 70 residues: Sec-independent protein translocase protein TatA (70 aa).

Residues 1–21 (MGSFSIWHWLIVLVVVALLFG) traverse the membrane as a helical segment. A disordered region spans residues 45–70 (KGESEQAEDETAKPLPKERDKDSARG).

The protein belongs to the TatA/E family. The Tat system comprises two distinct complexes: a TatABC complex, containing multiple copies of TatA, TatB and TatC subunits, and a separate TatA complex, containing only TatA subunits. Substrates initially bind to the TatABC complex, which probably triggers association of the separate TatA complex to form the active translocon.

Its subcellular location is the cell inner membrane. Functionally, part of the twin-arginine translocation (Tat) system that transports large folded proteins containing a characteristic twin-arginine motif in their signal peptide across membranes. TatA could form the protein-conducting channel of the Tat system. The chain is Sec-independent protein translocase protein TatA from Phenylobacterium zucineum (strain HLK1).